Reading from the N-terminus, the 154-residue chain is Protein X (154 aa).

Residues 68 to 117 (PCALRFTSARYMETAMNTSHHLPRQLYKWTLGLFVMSTTGVEKYFKDCVF) form a mitochondrial targeting sequence region.

The protein belongs to the orthohepadnavirus protein X family. As to quaternary structure, may form homodimer. May interact with host CEBPA, CFLAR, CREB1, DDB1, E4F1, HBXIP, HSPD1/HSP60, NFKBIA, POLR2E and SMAD4. Interacts with host SMC5-SMC6 complex and induces its degradation. Interacts with host TRPC4AP; leading to prevent ubiquitination of TRPC4AP. Interacts with host PLSCR1; this interaction promotes ubiquitination and degradation of HBx and impairs HBx-mediated cell proliferation. Post-translationally, a fraction may be phosphorylated in insect cells and HepG2 cells, a human hepatoblastoma cell line. Phosphorylated in vitro by host protein kinase C or mitogen-activated protein kinase. N-acetylated in insect cells.

It localises to the host cytoplasm. It is found in the host nucleus. The protein localises to the host mitochondrion. Multifunctional protein that plays a role in silencing host antiviral defenses and promoting viral transcription. Does not seem to be essential for HBV infection. May be directly involved in development of cirrhosis and liver cancer (hepatocellular carcinoma). Most of cytosolic activities involve modulation of cytosolic calcium. The effect on apoptosis is controversial depending on the cell types in which the studies have been conducted. May induce apoptosis by localizing in mitochondria and causing loss of mitochondrial membrane potential. May also modulate apoptosis by binding host CFLAR, a key regulator of the death-inducing signaling complex (DISC). Promotes viral transcription by using the host E3 ubiquitin ligase DDB1 to target the SMC5-SMC6 complex to proteasomal degradation. This host complex would otherwise bind to viral episomal DNA, and prevents its transcription. Moderately stimulates transcription of many different viral and cellular transcription elements. Promoters and enhancers stimulated by HBx contain DNA binding sites for NF-kappa-B, AP-1, AP-2, c-EBP, ATF/CREB, or the calcium-activated factor NF-AT. This Hepatitis B virus genotype G (isolate IG29227/2000) (HBV-G) protein is Protein X.